Consider the following 774-residue polypeptide: Neprilysin-2 (774 aa).

Topologically, residues 1–20 are cytoplasmic; the sequence is MQTVIQNPNWWRRRNKLEKS. The chain crosses the membrane as a helical; Signal-anchor for type II membrane protein span at residues 21–41; it reads LLVSLGIMFVVLATGFGLWIG. Topologically, residues 42-774 are extracellular; that stretch reads KVLRTSPPSN…MNPVQKCEVW (733 aa). A disordered region spans residues 50 to 79; that stretch reads SNPQATALHGDSTTINQVPTGTASKGKSGD. Residues 60 to 74 are compositionally biased toward polar residues; that stretch reads DSTTINQVPTGTASK. The Peptidase M13 domain occupies 83 to 774; sequence VCLTQECIHT…MNPVQKCEVW (692 aa). Intrachain disulfides connect Cys-84/Cys-89, Cys-107/Cys-759, Cys-115/Cys-719, Cys-171/Cys-424, and Cys-646/Cys-771. N-linked (GlcNAc...) asparagine glycosylation is found at Asn-173, Asn-239, Asn-264, Asn-305, Asn-315, Asn-358, and Asn-554. Zn(2+) is bound at residue His-609. Glu-610 is a catalytic residue. Residue His-613 coordinates Zn(2+). N-linked (GlcNAc...) asparagine glycosylation is present at Asn-653. Residue Glu-671 coordinates Zn(2+). The active-site Proton donor is Asp-675.

This sequence belongs to the peptidase M13 family. It depends on Zn(2+) as a cofactor. In terms of processing, N-glycosylated. The soluble form is probably produced by proteolytic cleavage. As to expression, detected in the stellate cells in the main segment and the bar-shaped cells in the initial segment of male and female Malpighian tubules (at protein level). Expressed in the spermatheca (at protein level). Expressed in the somatic cyst cells of the testes, with increased expression at the tail end of elongating cysts. Expressed in the ovaries with strong expression in the posterior polar cells and in border cells of stage 8, 9, and 10 follicles. In adults and third-instar larvae, expressed in the brain, ventral ganglion, and stellate cells. Also expressed in the foregut and the imaginal disks (eye, antennal and leg) of third-instar larvae. In stage 17 embryos, expressed in the tracheal system, foregut, hindgut and epidermis. Also expressed in the stellate cell progenitors of the caudal visceral mesoderm in embryos.

It localises to the cell membrane. Its subcellular location is the secreted. It carries out the reaction Preferential cleavage of polypeptides between hydrophobic residues, particularly with Phe or Tyr at P1'.. Metalloendoprotease which cleaves peptides such as tachykinin peptide TK-2 at the amino side of hydrophobic residues. Functions in female fertility, embryogenesis and memory formation. Required in females for normal patterns of egg laying, probably due to its function in sperm retention and preventing sperm displacement by rival ejaculates. Also required for normal patterns of hatching due to its important role in early embryonic development. Required in the dorsal paired medial neurons for the proper formation of middle-term memory. Also required in the mushroom body neurons where it functions redundantly with neprilysins Nep3 and Nep4 in normal long-term memory formation. In Drosophila melanogaster (Fruit fly), this protein is Neprilysin-2.